A 206-amino-acid chain; its full sequence is Small ribosomal subunit protein uS4 (206 aa).

An S4 RNA-binding domain is found at 96–156 (SRLDNVVYRM…NKSKNQSRIK (61 aa)).

It belongs to the universal ribosomal protein uS4 family. As to quaternary structure, part of the 30S ribosomal subunit. Contacts protein S5. The interaction surface between S4 and S5 is involved in control of translational fidelity.

Its function is as follows. One of the primary rRNA binding proteins, it binds directly to 16S rRNA where it nucleates assembly of the body of the 30S subunit. With S5 and S12 plays an important role in translational accuracy. The polypeptide is Small ribosomal subunit protein uS4 (Buchnera aphidicola subsp. Acyrthosiphon pisum (strain 5A)).